Here is a 93-residue protein sequence, read N- to C-terminus: MARPRISISMICLLILIVGFVLQSSQARKVLVPYGTSKGLFLSALPKGNVPPSGPSDKGHTSPPDDTDQRMVPENSPEIYRRLESVPSPGVGH.

The N-terminal stretch at 1 to 27 (MARPRISISMICLLILIVGFVLQSSQA) is a signal peptide. A propeptide spanning residues 28 to 78 (RKVLVPYGTSKGLFLSALPKGNVPPSGPSDKGHTSPPDDTDQRMVPENSPE) is cleaved from the precursor. Residues 45–93 (LPKGNVPPSGPSDKGHTSPPDDTDQRMVPENSPEIYRRLESVPSPGVGH) are disordered. Residues P87 and P89 each carry the hydroxyproline modification.

Belongs to the C-terminally encoded plant signaling peptide (CEP) family. In terms of assembly, interacts with CEP receptors (e.g. CEPR1 and CEPR2). In terms of processing, the mature small signaling peptide is generated by proteolytic processing of the longer precursor.

Its subcellular location is the secreted. It localises to the extracellular space. The protein resides in the apoplast. In terms of biological role, extracellular signaling peptide that may regulate primary root growth rate and systemic nitrogen (N)-demand signaling. This Arabidopsis thaliana (Mouse-ear cress) protein is Precursor of CEP13.